Reading from the N-terminus, the 457-residue chain is MGEETIAAIATGAGEGGIGIVRISGADALQVAERIFRPRRGRPLGCRRSHTVTYGWVVTPGGDRIDEALALVMRGPHSYTGEDVVELQCHGGQLAVRRVLEQALQAGARLAEPGEFTRRAFLNGRLDLSQAEAVVDLIRAKTDRAMAAAVAHLRGSLRQAIGRIRERLMEMMAHLEADIDFPELELEVQTREEVAAGCAWCLGEVERLLGGARTGRILREGLRAVLAGRPNVGKSSLLNRLVRENRAIVTPIPGTTRDVIAEWVELGGVPVQLFDTAGLRPTDDPVERIGVARTHEALAQAHLVLVVVDAAAGLGPEDREWISQLPQGAARVGVANKIDLNPAFELSALREALGGAPVVGVSAETGEGFDALEAEVARVAGAFDASEELLVNARQAEAIRRARNHLRDAQATLESGLGDELVAIDLRAAWMALGEVTGETAGEELLDQIFSRFCIGK.

R22, E86, and R125 together coordinate (6S)-5-formyl-5,6,7,8-tetrahydrofolate. Positions 221–381 (GLRAVLAGRP…LEAEVARVAG (161 aa)) constitute a TrmE-type G domain. Residue N231 participates in K(+) binding. Residues 231 to 236 (NVGKSS), 250 to 256 (TPIPGTT), and 275 to 278 (DTAG) contribute to the GTP site. S235 contacts Mg(2+). The K(+) site is built by T250, I252, and T255. T256 contributes to the Mg(2+) binding site. K457 contacts (6S)-5-formyl-5,6,7,8-tetrahydrofolate.

The protein belongs to the TRAFAC class TrmE-Era-EngA-EngB-Septin-like GTPase superfamily. TrmE GTPase family. Homodimer. Heterotetramer of two MnmE and two MnmG subunits. The cofactor is K(+).

Its subcellular location is the cytoplasm. In terms of biological role, exhibits a very high intrinsic GTPase hydrolysis rate. Involved in the addition of a carboxymethylaminomethyl (cmnm) group at the wobble position (U34) of certain tRNAs, forming tRNA-cmnm(5)s(2)U34. This chain is tRNA modification GTPase MnmE, found in Symbiobacterium thermophilum (strain DSM 24528 / JCM 14929 / IAM 14863 / T).